A 271-amino-acid polypeptide reads, in one-letter code: Putative phosphoenolpyruvate synthase regulatory protein (271 aa).

Residue 151-158 coordinates ADP; it reads GVSRSGKT.

The protein belongs to the pyruvate, phosphate/water dikinase regulatory protein family. PSRP subfamily.

The enzyme catalyses [pyruvate, water dikinase] + ADP = [pyruvate, water dikinase]-phosphate + AMP + H(+). The catalysed reaction is [pyruvate, water dikinase]-phosphate + phosphate + H(+) = [pyruvate, water dikinase] + diphosphate. In terms of biological role, bifunctional serine/threonine kinase and phosphorylase involved in the regulation of the phosphoenolpyruvate synthase (PEPS) by catalyzing its phosphorylation/dephosphorylation. This chain is Putative phosphoenolpyruvate synthase regulatory protein, found in Burkholderia thailandensis (strain ATCC 700388 / DSM 13276 / CCUG 48851 / CIP 106301 / E264).